The following is a 208-amino-acid chain: Fusaric acid resistance protein FusD (208 aa).

The chain crosses the membrane as a helical span at residues 7–29 (LLLSMLVSAIAFAVLFPPTAPWL).

Its subcellular location is the cell membrane. Functionally, involved in the resistance (detoxification) of the fungal toxin fusaric acid. This is Fusaric acid resistance protein FusD (fusD) from Burkholderia cepacia (Pseudomonas cepacia).